We begin with the raw amino-acid sequence, 3587 residues long: Tyrocidine synthase 2 (3587 aa).

The interval 466-1045 (AATMHELFSR…IQALAAYVEG (580 aa)) is domain 1 (Proline-activating). Carrier domains are found at residues 972 to 1047 (APTT…EGGE) and 2007 to 2082 (APAT…EHSE). O-(pantetheine 4'-phosphoryl)serine occurs at positions 1007 and 2042. The interval 1522–2081 (EQTAVVFGDK…RDLARLIEHS (560 aa)) is domain 2 (Phenylalanine-activating). The interval 2540-3122 (YRADQTIQQL…NSRESEQGVV (583 aa)) is domain 3 (D-phenylalanine-activating). Positions 3017–3040 (NDKIDRKALPKPNQEENRTEQYAA) are disordered. A compositionally biased stretch (basic and acidic residues) spans 3018–3035 (DKIDRKALPKPNQEENRT). The Carrier 3 domain occupies 3040-3114 (APQTELEQLL…EAALRVIPNS (75 aa)). Serine 3075 carries the post-translational modification O-(pantetheine 4'-phosphoryl)serine.

This sequence belongs to the ATP-dependent AMP-binding enzyme family. Large multienzyme complex of TycA, TycB and TycC. Pantetheine 4'-phosphate is required as a cofactor.

It catalyses the reaction L-phenylalanine + ATP + H2O = D-phenylalanine + AMP + diphosphate + H(+). Its pathway is antibiotic biosynthesis; tyrocidine biosynthesis. Functionally, activates the second to fourth amino acids in tyrocidine (in tyrocidine A, Pro, Phe, and D-Phe) and epimerizes the last one. This is Tyrocidine synthase 2 (tycB) from Brevibacillus parabrevis.